A 307-amino-acid polypeptide reads, in one-letter code: N-acetylmuramic acid 6-phosphate etherase (307 aa).

In terms of domain architecture, SIS spans 60-223 (AAQAIARGGR…STGAMVRIGK (164 aa)). Residue E88 is the Proton donor of the active site. Residue E119 is part of the active site.

This sequence belongs to the GCKR-like family. MurNAc-6-P etherase subfamily. In terms of assembly, homodimer.

The catalysed reaction is N-acetyl-D-muramate 6-phosphate + H2O = N-acetyl-D-glucosamine 6-phosphate + (R)-lactate. Its pathway is amino-sugar metabolism; N-acetylmuramate degradation. In terms of biological role, specifically catalyzes the cleavage of the D-lactyl ether substituent of MurNAc 6-phosphate, producing GlcNAc 6-phosphate and D-lactate. The chain is N-acetylmuramic acid 6-phosphate etherase from Synechococcus elongatus (strain ATCC 33912 / PCC 7942 / FACHB-805) (Anacystis nidulans R2).